Reading from the N-terminus, the 588-residue chain is Aspartate--tRNA ligase (588 aa).

Residue Glu-177 coordinates L-aspartate. The interval 201–204 (QLFK) is aspartate. Arg-223 lines the L-aspartate pocket. Residues 223–225 (RDE) and Gln-232 each bind ATP. Residue His-451 participates in L-aspartate binding. Glu-485 contributes to the ATP binding site. Arg-492 lines the L-aspartate pocket. 537–540 (GLDR) contributes to the ATP binding site.

The protein belongs to the class-II aminoacyl-tRNA synthetase family. Type 1 subfamily. As to quaternary structure, homodimer.

Its subcellular location is the cytoplasm. The catalysed reaction is tRNA(Asp) + L-aspartate + ATP = L-aspartyl-tRNA(Asp) + AMP + diphosphate. In terms of biological role, catalyzes the attachment of L-aspartate to tRNA(Asp) in a two-step reaction: L-aspartate is first activated by ATP to form Asp-AMP and then transferred to the acceptor end of tRNA(Asp). The chain is Aspartate--tRNA ligase from Staphylococcus aureus (strain MRSA252).